A 346-amino-acid polypeptide reads, in one-letter code: NADP-dependent alcohol dehydrogenase C (346 aa).

C41, H63, C94, C97, C100, C108, and C158 together coordinate Zn(2+).

It belongs to the zinc-containing alcohol dehydrogenase family. Zn(2+) is required as a cofactor.

It carries out the reaction a primary alcohol + NADP(+) = an aldehyde + NADPH + H(+). The polypeptide is NADP-dependent alcohol dehydrogenase C (adhC) (Mycobacterium bovis (strain ATCC BAA-935 / AF2122/97)).